The following is a 1166-amino-acid chain: Pesticidal crystal protein Cry1Ga (1166 aa).

Belongs to the delta endotoxin family.

Functionally, promotes colloidosmotic lysis by binding to the midgut epithelial cells of insects. The protein is Pesticidal crystal protein Cry1Ga (cry1Ga) of Bacillus thuringiensis.